A 127-amino-acid polypeptide reads, in one-letter code: Putative B3 domain-containing protein At4g12617 (127 aa).

A DNA-binding region (TF-B3) is located at residues 35–127 (IMMPKTLLEA…HTRLNFKHVA (93 aa)).

Its subcellular location is the nucleus. This is Putative B3 domain-containing protein At4g12617 from Arabidopsis thaliana (Mouse-ear cress).